Reading from the N-terminus, the 225-residue chain is Thymidylate kinase (225 aa).

15–22 (GGEGSGKS) lines the ATP pocket.

This sequence belongs to the thymidylate kinase family.

It carries out the reaction dTMP + ATP = dTDP + ADP. In terms of biological role, phosphorylation of dTMP to form dTDP in both de novo and salvage pathways of dTTP synthesis. This chain is Thymidylate kinase, found in Protochlamydia amoebophila (strain UWE25).